The chain runs to 1588 residues: MVQLAKVPILGNDIIHVGYNIHDHLVETIIKHCPSSTYVICNDTNLSKVPYYQQLVLEFKASLPEGSRLLTYVVKPGETSKSRETKAQLEDYLLVEGCTRDTVMVAIGGGVIGDMIGFVASTFMRGVRVVQVPTSLLAMVDSSIGGKTAIDTPLGKNFIGAFWQPKFVLVDIKWLETLAKREFINGMAEVIKTACIWNADEFTRLESNASLFLNVVNGAKNVKVTNQLTNEIDEISNTDIEAMLDHTYKLVLESIKVKAEVVSSDERESSLRNLLNFGHSIGHAYEAILTPQALHGECVSIGMVKEAELSRYFGILSPTQVARLSKILVAYGLPVSPDEKWFKELTLHKKTPLDILLKKMSIDKKNEGSKKKVVILESIGKCYGDSAQFVSDEDLRFILTDETLVYPFKDIPADQQKVVIPPGSKSISNRALILAALGEGQCKIKNLLHSDDTKHMLTAVHELKGATISWEDNGETVVVEGHGGSTLSACADPLYLGNAGTASRFLTSLAALVNSTPSQKYIVLTGNARMQQRPIAPLVDSLRANGTKIEYLNNEGSLPIKVYTDSVFKGGRIELAATVSSQYVSSILMCAPYAEEPVTLALVGGKPISKLYVDMTIKMMEKFGINVETSTTEPYTYYIPKGHYINPSEYVIESDASSATYPLAFAAMTGTTVTVPNIGFESLQGDARFARDVLKPMGCKITQTATSTTVSGPPVGTLKPLKHVDMEPMTDAFLTACVVAAISHDSDPNSANTTTIEGIANQRVKECNRILAMATELAKFGVKTTELPDGIQVHGLNSIKDLKVPSDSSGPVGVCTYDDHRVAMSFSLLAGMVNSQNERDEVANPVRILERHCTGKTWPGWWDVLHSELGAKLDGAEPLECTSKKNSKKSVVIIGMRAAGKTTISKWCASALGYKLVDLDELFEQQHNNQSVKQFVVENGWEKFREEETRIFKEVIQNYGDDGYVFSTGGGIVESAESRKALKDFASSGGYVLHLHRDIEETIVFLQSDPSRPAYVEEIREVWNRREGWYKECSNFSFFAPHCSAEAEFQALRRSFSKHIATITGVREIEIPSGRSAFVCLTFDDLTEQTENLTPICYGCEAVEVRVDHLANYSADFVSKQLSILRKATDSIPIIFTVRTMKQGGNFPDEEFKTLRELYDIALKNGVEFLDLELTLPTDIQYEVINKRGNTKIIGSHHDFQGLYSWDDAEWENRFNQALTLDVDVVKFVGTAVNFEDNLRLEHFRDTHKNKPLIAVNMTSKGSISRVLNNVLTPVTSDLLPNSAAPGQLTVAQINKMYTSMGGIEPKELFVVGKPIGHSRSPILHNTGYEILGLPHKFDKFETESAQLVKEKLLDGNKNFGGAAVTIPLKLDIMQYMDELTDAAKVIGAVNTVIPLGNKKFKGDNTDWLGIRNALINNGVPEYVGHTAGLVIGAGGTSRAALYALHSLGCKKIFIINRTTSKLKPLIESLPSEFNIIGIESTKSIEEIKEHVGVAVSCVPADKPLDDELLSKLERFLVKGAHAAFVPTLLEAAYKPSVTPVMTISQDKYQWHVVPGSQMLVHQGVAQFEKWTGFKGPFKAIFDAVTKE.

The 3-dehydroquinate synthase stretch occupies residues 1–392; the sequence is MVQLAKVPIL…YGDSAQFVSD (392 aa). NAD(+) is bound by residues 43 to 45, 78 to 81, 109 to 111, and aspartate 114; these read DTN, ETSK, and GGV. Arginine 125 serves as a coordination point for 7-phospho-2-dehydro-3-deoxy-D-arabino-heptonate. Residue 134–135 coordinates NAD(+); the sequence is TS. Residues aspartate 141 and lysine 147 each contribute to the 7-phospho-2-dehydro-3-deoxy-D-arabino-heptonate site. Lysine 156 provides a ligand contact to NAD(+). Asparagine 157 serves as a coordination point for 7-phospho-2-dehydro-3-deoxy-D-arabino-heptonate. NAD(+) contacts are provided by residues 174–177 and asparagine 185; that span reads WLET. Glutamate 189 contributes to the Zn(2+) binding site. 7-phospho-2-dehydro-3-deoxy-D-arabino-heptonate-binding positions include 189-192 and lysine 258; that span reads EVIK. Glutamate 268 acts as the Proton acceptor; for 3-dehydroquinate synthase activity in catalysis. 7-phospho-2-dehydro-3-deoxy-D-arabino-heptonate-binding positions include 272 to 276 and histidine 279; that span reads RNLLN. Position 279 (histidine 279) interacts with Zn(2+). The active-site Proton acceptor; for 3-dehydroquinate synthase activity is the histidine 283. Residues histidine 295 and lysine 364 each coordinate 7-phospho-2-dehydro-3-deoxy-D-arabino-heptonate. A Zn(2+)-binding site is contributed by histidine 295. The interval 405-871 is EPSP synthase; the sequence is VYPFKDIPAD…WDVLHSELGA (467 aa). Residue cysteine 853 is the For EPSP synthase activity of the active site. The interval 890–1080 is shikimate kinase; the sequence is SVVIIGMRAA…IPSGRSAFVC (191 aa). 895–902 contacts ATP; it reads GMRAAGKT. The tract at residues 1081–1293 is 3-dehydroquinase; it reads LTFDDLTEQT…AAPGQLTVAQ (213 aa). Residue histidine 1198 is the Proton acceptor; for 3-dehydroquinate dehydratase activity of the active site. Lysine 1227 serves as the catalytic Schiff-base intermediate with substrate; for 3-dehydroquinate dehydratase activity. The interval 1306–1588 is shikimate dehydrogenase; that stretch reads PKELFVVGKP…KAIFDAVTKE (283 aa).

It in the N-terminal section; belongs to the sugar phosphate cyclases superfamily. Dehydroquinate synthase family. In the 2nd section; belongs to the EPSP synthase family. The protein in the 3rd section; belongs to the shikimate kinase family. This sequence in the 4th section; belongs to the type-I 3-dehydroquinase family. It in the C-terminal section; belongs to the shikimate dehydrogenase family. As to quaternary structure, homodimer. Zn(2+) serves as cofactor.

The protein resides in the cytoplasm. The catalysed reaction is 7-phospho-2-dehydro-3-deoxy-D-arabino-heptonate = 3-dehydroquinate + phosphate. It carries out the reaction 3-dehydroquinate = 3-dehydroshikimate + H2O. The enzyme catalyses shikimate + NADP(+) = 3-dehydroshikimate + NADPH + H(+). It catalyses the reaction shikimate + ATP = 3-phosphoshikimate + ADP + H(+). The catalysed reaction is 3-phosphoshikimate + phosphoenolpyruvate = 5-O-(1-carboxyvinyl)-3-phosphoshikimate + phosphate. It participates in metabolic intermediate biosynthesis; chorismate biosynthesis; chorismate from D-erythrose 4-phosphate and phosphoenolpyruvate: step 2/7. Its pathway is metabolic intermediate biosynthesis; chorismate biosynthesis; chorismate from D-erythrose 4-phosphate and phosphoenolpyruvate: step 3/7. It functions in the pathway metabolic intermediate biosynthesis; chorismate biosynthesis; chorismate from D-erythrose 4-phosphate and phosphoenolpyruvate: step 4/7. The protein operates within metabolic intermediate biosynthesis; chorismate biosynthesis; chorismate from D-erythrose 4-phosphate and phosphoenolpyruvate: step 5/7. It participates in metabolic intermediate biosynthesis; chorismate biosynthesis; chorismate from D-erythrose 4-phosphate and phosphoenolpyruvate: step 6/7. Functionally, the AROM polypeptide catalyzes 5 consecutive enzymatic reactions in prechorismate polyaromatic amino acid biosynthesis. The chain is Pentafunctional AROM polypeptide from Saccharomyces cerevisiae (strain Lalvin EC1118 / Prise de mousse) (Baker's yeast).